The chain runs to 763 residues: Eukaryotic translation initiation factor 3 subunit B (763 aa).

The tract at residues 1–136 is sufficient for interaction with HCR1 and TIF32; sequence MKNFLPRTLK…LFVECGSMND (136 aa). Residues 28–261 form a sufficient for interaction with PIC8 region; that stretch reads RNTQLKRSKI…GVTAWGGPNF (234 aa). Ser-61 carries the post-translational modification Phosphoserine. A Phosphotyrosine modification is found at Tyr-67. The 86-residue stretch at 77-162 folds into the RRM domain; the sequence is QYIVVNGAPV…HRLFLYTMKD (86 aa). WD repeat units follow at residues 228–266, 277–325, 373–416, 484–524, 544–589, and 605–650; these read RENW…RLRR, VSPN…LMAT, LKPS…SACT, ELKD…IRFY, IPKT…EKNI, and PTYS…VKED. Ser-669 carries the phosphoserine modification.

The protein belongs to the eIF-3 subunit B family. As to quaternary structure, the eukaryotic translation initiation factor 3 (eIF-3) core complex is composed of TIF32, PRT1, NIP1, TIF34 and TIF35. A subcomplex of TIF32, NIP1 and PRT1 mediates the interaction with eIF-1, TIF5/eIF-5 and HCR1. The factors eIF-1, eIF-2, eIF-3, TIF5/eIF-5 and methionyl-tRNAi form a multifactor complex (MFC) that may bind to the 40S ribosome.

The protein localises to the cytoplasm. Functionally, RNA-binding component of the eukaryotic translation initiation factor 3 (eIF-3) complex, which is involved in protein synthesis of a specialized repertoire of mRNAs and, together with other initiation factors, stimulates binding of mRNA and methionyl-tRNAi to the 40S ribosome. The eIF-3 complex specifically targets and initiates translation of a subset of mRNAs involved in cell proliferation. The chain is Eukaryotic translation initiation factor 3 subunit B from Saccharomyces cerevisiae (strain ATCC 204508 / S288c) (Baker's yeast).